Reading from the N-terminus, the 493-residue chain is Glutamyl-tRNA(Gln) amidotransferase subunit A (493 aa).

Active-site charge relay system residues include Lys81 and Ser156. Ser180 functions as the Acyl-ester intermediate in the catalytic mechanism.

It belongs to the amidase family. GatA subfamily. In terms of assembly, heterotrimer of A, B and C subunits.

The catalysed reaction is L-glutamyl-tRNA(Gln) + L-glutamine + ATP + H2O = L-glutaminyl-tRNA(Gln) + L-glutamate + ADP + phosphate + H(+). Allows the formation of correctly charged Gln-tRNA(Gln) through the transamidation of misacylated Glu-tRNA(Gln) in organisms which lack glutaminyl-tRNA synthetase. The reaction takes place in the presence of glutamine and ATP through an activated gamma-phospho-Glu-tRNA(Gln). This Mycobacterium ulcerans (strain Agy99) protein is Glutamyl-tRNA(Gln) amidotransferase subunit A.